Consider the following 132-residue polypeptide: Dehydratase CTB10 (132 aa).

One can recognise an EthD domain in the interval 21-117 (PDQSEEDHHN…IPDHFNFADM (97 aa)).

Belongs to the tpcK family.

Its pathway is mycotoxin biosynthesis. Functionally, dehydratase; part of the gene cluster that mediates the biosynthesis of cercosporin, a light-activated, non-host-selective toxin. The perylenequinone chromophore of cercosporin absorbs light energy to attain an electronically-activated triplet state and produces active oxygen species such as the hydroxyl radical, superoxide, hydrogen peroxide or singlet oxygen upon reaction with oxygen molecules. These reactive oxygen species cause damage to various cellular components including lipids, proteins and nucleic acids. The first step of cercosporin biosynthesis is performed by the polyketide synthase CTB1 which catalyzes the formation of nor-toralactone. The starter unit acyltransferase (SAT) domain of CTB1 initiates polyketide extension by the selective utilization of acetyl-CoA, which is elongated to the heptaketide in the beta-ketoacyl synthase (KS) domain by successive condensations with six malonyl units introduced by the malonyl acyltransferase (MAT) domain. The product template (PT) domain catalyzes C4-C9 and C2-C11 aldol cyclizations and dehydrations to a trihydroxynaphthalene, which is thought to be delivered to the thioesterase (TE) domain for product release. The bifunctional enzyme CTB3 then methylates nor-toralactone to toralactone before conducting an unusual oxidative aromatic ring opening. The O-methyltransferase CTB2 further methylates the nascent OH-6 of the CBT3 product, blocking further oxidation at this site before the reductase CTB6 reduces the 2-oxopropyl ketone at position C7, giving naphthalene. The FAD-dependent monooxygenase CTB5 in concert with the multicopper oxidase CTB12 are responsible for homodimerization of naphthalene with CTB7 installing the dioxepine moiety, finally producing cercosporin. The fasciclin domain-containing protein CTB11 might act with CTB5 and CTB12 whereas the roles of CTB9 and CTB10 have still to be elucidated. In Cercospora beticola (Sugarbeet leaf spot fungus), this protein is Dehydratase CTB10.